Reading from the N-terminus, the 229-residue chain is Non-structural protein P8 (229 aa).

2 helical membrane-spanning segments follow: residues 119–139 (IIHM…VCTL) and 162–182 (SLNP…MVCA).

This sequence belongs to the orbivirus NS3 family. Forms homooligomers via coiled-coil motif. Interacts with host OPTN; this interaction inhibits innate immune response.

It localises to the host cell membrane. The protein resides in the host Golgi apparatus. Functionally, plays a role in the inhibition of host innate immune response. Interacts with host OPTN and thus inhibits the recruitment of TBK1 to the host Golgi apparatus. In turn, downstream partner IRF3 cannot be activated and IFN-beta production is impaired. Facilitates viral particle release either by increasing plasma membrane permeability through a viroporin-like activity or by viral budding. The polypeptide is Non-structural protein P8 (Segment-10) (Bluetongue virus 1 (isolate Australia) (BTV 1)).